The chain runs to 285 residues: Bifunctional protein FolD (285 aa).

NADP(+) contacts are provided by residues 165–167 and serine 190; that span reads GRS.

This sequence belongs to the tetrahydrofolate dehydrogenase/cyclohydrolase family. As to quaternary structure, homodimer.

The catalysed reaction is (6R)-5,10-methylene-5,6,7,8-tetrahydrofolate + NADP(+) = (6R)-5,10-methenyltetrahydrofolate + NADPH. It carries out the reaction (6R)-5,10-methenyltetrahydrofolate + H2O = (6R)-10-formyltetrahydrofolate + H(+). It functions in the pathway one-carbon metabolism; tetrahydrofolate interconversion. Its function is as follows. Catalyzes the oxidation of 5,10-methylenetetrahydrofolate to 5,10-methenyltetrahydrofolate and then the hydrolysis of 5,10-methenyltetrahydrofolate to 10-formyltetrahydrofolate. The chain is Bifunctional protein FolD from Burkholderia cenocepacia (strain HI2424).